Here is a 456-residue protein sequence, read N- to C-terminus: Phosphomethylpyrimidine synthase (456 aa).

Residues Asn80, Met109, Tyr139, His175, Ser195–Gly197, Asp236–Arg239, and Glu275 contribute to the substrate site. Zn(2+) is bound at residue His279. Residue Tyr302 participates in substrate binding. Zn(2+) is bound at residue His343. 3 residues coordinate [4Fe-4S] cluster: Cys423, Cys426, and Cys431.

Belongs to the ThiC family. [4Fe-4S] cluster is required as a cofactor.

The catalysed reaction is 5-amino-1-(5-phospho-beta-D-ribosyl)imidazole + S-adenosyl-L-methionine = 4-amino-2-methyl-5-(phosphooxymethyl)pyrimidine + CO + 5'-deoxyadenosine + formate + L-methionine + 3 H(+). It functions in the pathway cofactor biosynthesis; thiamine diphosphate biosynthesis. Catalyzes the synthesis of the hydroxymethylpyrimidine phosphate (HMP-P) moiety of thiamine from aminoimidazole ribotide (AIR) in a radical S-adenosyl-L-methionine (SAM)-dependent reaction. The polypeptide is Phosphomethylpyrimidine synthase (Prochlorococcus marinus (strain MIT 9215)).